Reading from the N-terminus, the 472-residue chain is NADH-quinone oxidoreductase subunit N 2 (472 aa).

13 consecutive transmembrane segments (helical) span residues 3–23 (WMSF…LLLS), 34–54 (HVAA…SVGA), 67–87 (LFSQ…VTLC), 106–126 (FVCT…VVFI), 156–176 (FLVG…LYGA), 198–218 (VVIG…VFPF), 233–253 (VSAY…VRVI), 263–283 (LVHV…LAAI), 291–311 (LLAY…LSMN), 317–337 (AAVF…LVLV), 360–380 (ILAL…PTVG), 398–418 (TLVL…LLVI), and 441–461 (LLSG…NQII).

This sequence belongs to the complex I subunit 2 family. As to quaternary structure, NDH-1 is composed of 14 different subunits. Subunits NuoA, H, J, K, L, M, N constitute the membrane sector of the complex.

It localises to the cell inner membrane. It catalyses the reaction a quinone + NADH + 5 H(+)(in) = a quinol + NAD(+) + 4 H(+)(out). NDH-1 shuttles electrons from NADH, via FMN and iron-sulfur (Fe-S) centers, to quinones in the respiratory chain. The immediate electron acceptor for the enzyme in this species is believed to be ubiquinone. Couples the redox reaction to proton translocation (for every two electrons transferred, four hydrogen ions are translocated across the cytoplasmic membrane), and thus conserves the redox energy in a proton gradient. This chain is NADH-quinone oxidoreductase subunit N 2, found in Syntrophobacter fumaroxidans (strain DSM 10017 / MPOB).